The sequence spans 372 residues: Phospho-N-acetylmuramoyl-pentapeptide-transferase (372 aa).

The next 10 membrane-spanning stretches (helical) occupy residues 25–45 (RSLL…PVMI), 73–93 (TMGG…WADL), 98–118 (VWIV…DDWI), 134–154 (FFWT…IAQN), 176–196 (SIPL…YLVI), 211–231 (GLAI…AYLA), 251–271 (LVVI…YNAH), 275–295 (IFMG…IAVM), 300–320 (IVFA…FLQI), and 349–369 (QVVT…LMTL).

The protein belongs to the glycosyltransferase 4 family. MraY subfamily. Mg(2+) serves as cofactor.

It localises to the cell inner membrane. The enzyme catalyses UDP-N-acetyl-alpha-D-muramoyl-L-alanyl-gamma-D-glutamyl-meso-2,6-diaminopimeloyl-D-alanyl-D-alanine + di-trans,octa-cis-undecaprenyl phosphate = di-trans,octa-cis-undecaprenyl diphospho-N-acetyl-alpha-D-muramoyl-L-alanyl-D-glutamyl-meso-2,6-diaminopimeloyl-D-alanyl-D-alanine + UMP. Its pathway is cell wall biogenesis; peptidoglycan biosynthesis. Its function is as follows. Catalyzes the initial step of the lipid cycle reactions in the biosynthesis of the cell wall peptidoglycan: transfers peptidoglycan precursor phospho-MurNAc-pentapeptide from UDP-MurNAc-pentapeptide onto the lipid carrier undecaprenyl phosphate, yielding undecaprenyl-pyrophosphoryl-MurNAc-pentapeptide, known as lipid I. The sequence is that of Phospho-N-acetylmuramoyl-pentapeptide-transferase from Acinetobacter baylyi (strain ATCC 33305 / BD413 / ADP1).